The following is a 513-amino-acid chain: Anthranilate synthase component 1 (513 aa).

L-tryptophan contacts are provided by residues serine 50 and 279–281 (PYM). 314–315 (GT) contributes to the chorismate binding site. Position 341 (glutamate 341) interacts with Mg(2+). Chorismate-binding positions include tyrosine 429, arginine 449, 463-465 (GAG), and glycine 465. Mg(2+) is bound at residue glutamate 478.

It belongs to the anthranilate synthase component I family. Heterotetramer consisting of two non-identical subunits: a beta subunit (TrpG) and a large alpha subunit (TrpE). Requires Mg(2+) as cofactor.

The enzyme catalyses chorismate + L-glutamine = anthranilate + pyruvate + L-glutamate + H(+). It participates in amino-acid biosynthesis; L-tryptophan biosynthesis; L-tryptophan from chorismate: step 1/5. With respect to regulation, feedback inhibited by tryptophan. Part of a heterotetrameric complex that catalyzes the two-step biosynthesis of anthranilate, an intermediate in the biosynthesis of L-tryptophan. In the first step, the glutamine-binding beta subunit (TrpG) of anthranilate synthase (AS) provides the glutamine amidotransferase activity which generates ammonia as a substrate that, along with chorismate, is used in the second step, catalyzed by the large alpha subunit of AS (TrpE) to produce anthranilate. In the absence of TrpG, TrpE can synthesize anthranilate directly from chorismate and high concentrations of ammonia. The sequence is that of Anthranilate synthase component 1 (trpE) from Bacillus pumilus (Bacillus mesentericus).